A 316-amino-acid polypeptide reads, in one-letter code: 4-hydroxy-3-methylbut-2-enyl diphosphate reductase (316 aa).

Cys-12 provides a ligand contact to [4Fe-4S] cluster. 2 residues coordinate (2E)-4-hydroxy-3-methylbut-2-enyl diphosphate: His-43 and His-81. His-43 and His-81 together coordinate dimethylallyl diphosphate. Residues His-43 and His-81 each contribute to the isopentenyl diphosphate site. Cys-103 contacts [4Fe-4S] cluster. A (2E)-4-hydroxy-3-methylbut-2-enyl diphosphate-binding site is contributed by His-131. His-131 provides a ligand contact to dimethylallyl diphosphate. His-131 serves as a coordination point for isopentenyl diphosphate. Glu-133 serves as the catalytic Proton donor. Residue Thr-170 coordinates (2E)-4-hydroxy-3-methylbut-2-enyl diphosphate. Cys-198 contacts [4Fe-4S] cluster. (2E)-4-hydroxy-3-methylbut-2-enyl diphosphate is bound by residues Ser-226, Asn-228, and Ser-271. Positions 226, 228, and 271 each coordinate dimethylallyl diphosphate. 3 residues coordinate isopentenyl diphosphate: Ser-226, Asn-228, and Ser-271.

Belongs to the IspH family. Requires [4Fe-4S] cluster as cofactor.

The catalysed reaction is isopentenyl diphosphate + 2 oxidized [2Fe-2S]-[ferredoxin] + H2O = (2E)-4-hydroxy-3-methylbut-2-enyl diphosphate + 2 reduced [2Fe-2S]-[ferredoxin] + 2 H(+). It carries out the reaction dimethylallyl diphosphate + 2 oxidized [2Fe-2S]-[ferredoxin] + H2O = (2E)-4-hydroxy-3-methylbut-2-enyl diphosphate + 2 reduced [2Fe-2S]-[ferredoxin] + 2 H(+). The protein operates within isoprenoid biosynthesis; dimethylallyl diphosphate biosynthesis; dimethylallyl diphosphate from (2E)-4-hydroxy-3-methylbutenyl diphosphate: step 1/1. It functions in the pathway isoprenoid biosynthesis; isopentenyl diphosphate biosynthesis via DXP pathway; isopentenyl diphosphate from 1-deoxy-D-xylulose 5-phosphate: step 6/6. Catalyzes the conversion of 1-hydroxy-2-methyl-2-(E)-butenyl 4-diphosphate (HMBPP) into a mixture of isopentenyl diphosphate (IPP) and dimethylallyl diphosphate (DMAPP). Acts in the terminal step of the DOXP/MEP pathway for isoprenoid precursor biosynthesis. The chain is 4-hydroxy-3-methylbut-2-enyl diphosphate reductase from Bacillus cereus (strain AH820).